The following is a 238-amino-acid chain: Ribosomal RNA small subunit methyltransferase E 1 (238 aa).

This sequence belongs to the RNA methyltransferase RsmE family.

The protein localises to the cytoplasm. It carries out the reaction uridine(1498) in 16S rRNA + S-adenosyl-L-methionine = N(3)-methyluridine(1498) in 16S rRNA + S-adenosyl-L-homocysteine + H(+). Its function is as follows. Specifically methylates the N3 position of the uracil ring of uridine 1498 (m3U1498) in 16S rRNA. Acts on the fully assembled 30S ribosomal subunit. The polypeptide is Ribosomal RNA small subunit methyltransferase E 1 (rsmE1) (Borreliella burgdorferi (strain ATCC 35210 / DSM 4680 / CIP 102532 / B31) (Borrelia burgdorferi)).